Reading from the N-terminus, the 710-residue chain is Aminopeptidase P2 (710 aa).

The N-terminal 79 residues, Met1–Val79, are a transit peptide targeting the chloroplast. Residues Arg147 and His486 each contribute to the a peptide site. Positions 506, 517, and 580 each coordinate Mn(2+). His580, His589, and Glu614 together coordinate a peptide. Mn(2+) is bound by residues Glu614 and Glu628.

It belongs to the peptidase M24B family. Homodimer. The cofactor is Mn(2+).

Its subcellular location is the plastid. It localises to the chloroplast. It carries out the reaction Release of any N-terminal amino acid, including proline, that is linked to proline, even from a dipeptide or tripeptide.. Functionally, catalyzes the removal of a penultimate prolyl residue from the N-termini of peptides, such as Arg-Pro-Pro. The sequence is that of Aminopeptidase P2 from Arabidopsis thaliana (Mouse-ear cress).